Consider the following 1033-residue polypeptide: Putative U-box domain-containing protein 42 (1033 aa).

The interval 145-226 (SQSQMTDIPD…SSNASSQRKY (82 aa)) is disordered. Residues 200–226 (LSKSQSQSTEIPDIPSQSSNASSQRKY) are compositionally biased toward polar residues. The U-box domain maps to 245–322 (PPYQAFICPL…QEWKVRNEAA (78 aa)). 5 ARM repeats span residues 483 to 522 (PENI…EIDI), 523 to 562 (GHEK…HISL), 564 to 608 (HPNN…NILE), 610 to 659 (GLEH…SLSK), and 665 to 704 (ATIV…ALTP).

It carries out the reaction S-ubiquitinyl-[E2 ubiquitin-conjugating enzyme]-L-cysteine + [acceptor protein]-L-lysine = [E2 ubiquitin-conjugating enzyme]-L-cysteine + N(6)-ubiquitinyl-[acceptor protein]-L-lysine.. Its pathway is protein modification; protein ubiquitination. Functionally, functions as an E3 ubiquitin ligase. The sequence is that of Putative U-box domain-containing protein 42 (PUB42) from Arabidopsis thaliana (Mouse-ear cress).